Reading from the N-terminus, the 456-residue chain is Adenylosuccinate lyase (456 aa).

Residues 15-16 (RY) and 90-92 (NHD) each bind N(6)-(1,2-dicarboxyethyl)-AMP. N6-acetyllysine is present on Lys-94. Residue 122 to 123 (TS) participates in N(6)-(1,2-dicarboxyethyl)-AMP binding. Residue His-171 is the Proton donor/acceptor of the active site. Position 247 (Gln-247) interacts with N(6)-(1,2-dicarboxyethyl)-AMP. Residue Ser-295 is the Proton donor/acceptor of the active site. Residues Ser-296, 301 to 303 (KVN), Asn-309, Arg-335, and 340 to 344 (STVLR) contribute to the N(6)-(1,2-dicarboxyethyl)-AMP site. At Lys-366 the chain carries N6-acetyllysine.

It belongs to the lyase 1 family. Adenylosuccinate lyase subfamily. Homotetramer. Residues from neighboring subunits contribute catalytic and substrate-binding residues to each active site.

The enzyme catalyses N(6)-(1,2-dicarboxyethyl)-AMP = fumarate + AMP. It catalyses the reaction (2S)-2-[5-amino-1-(5-phospho-beta-D-ribosyl)imidazole-4-carboxamido]succinate = 5-amino-1-(5-phospho-beta-D-ribosyl)imidazole-4-carboxamide + fumarate. Its pathway is purine metabolism; AMP biosynthesis via de novo pathway; AMP from IMP: step 2/2. The protein operates within purine metabolism; IMP biosynthesis via de novo pathway; 5-amino-1-(5-phospho-D-ribosyl)imidazole-4-carboxamide from 5-amino-1-(5-phospho-D-ribosyl)imidazole-4-carboxylate: step 2/2. Its function is as follows. Catalyzes two reactions in de novo purine nucleotide biosynthesis. Catalyzes the breakdown of 5-aminoimidazole- (N-succinylocarboxamide) ribotide (SAICAR or 2-[5-amino-1-(5-phospho-beta-D-ribosyl)imidazole-4-carboxamido]succinate) to 5-aminoimidazole-4-carboxamide ribotide (AICAR or 5-amino-1-(5-phospho-beta-D-ribosyl)imidazole-4-carboxamide) and fumarate, and of adenylosuccinate (ADS or N(6)-(1,2-dicarboxyethyl)-AMP) to adenosine monophosphate (AMP) and fumarate. This chain is Adenylosuccinate lyase (purB), found in Escherichia coli O6:H1 (strain CFT073 / ATCC 700928 / UPEC).